The sequence spans 120 residues: Ribosome-binding factor A (120 aa).

The protein belongs to the RbfA family. Monomer. Binds 30S ribosomal subunits, but not 50S ribosomal subunits or 70S ribosomes.

Its subcellular location is the cytoplasm. Its function is as follows. One of several proteins that assist in the late maturation steps of the functional core of the 30S ribosomal subunit. Associates with free 30S ribosomal subunits (but not with 30S subunits that are part of 70S ribosomes or polysomes). Required for efficient processing of 16S rRNA. May interact with the 5'-terminal helix region of 16S rRNA. In Clostridium botulinum (strain Loch Maree / Type A3), this protein is Ribosome-binding factor A.